Here is a 249-residue protein sequence, read N- to C-terminus: tRNA (guanine-N(1)-)-methyltransferase (249 aa).

S-adenosyl-L-methionine contacts are provided by residues Gly-113 and 133–138 (IGDYVL).

It belongs to the RNA methyltransferase TrmD family. In terms of assembly, homodimer.

Its subcellular location is the cytoplasm. The enzyme catalyses guanosine(37) in tRNA + S-adenosyl-L-methionine = N(1)-methylguanosine(37) in tRNA + S-adenosyl-L-homocysteine + H(+). In terms of biological role, specifically methylates guanosine-37 in various tRNAs. In Aeromonas salmonicida (strain A449), this protein is tRNA (guanine-N(1)-)-methyltransferase.